A 339-amino-acid chain; its full sequence is Dihydroorotate dehydrogenase (quinone) (339 aa).

FMN-binding positions include 62-66 (AGMDK) and Thr86. Position 66 (Lys66) interacts with substrate. Residue 111–115 (NRMGF) coordinates substrate. Positions 139 and 172 each coordinate FMN. Asn172 is a substrate binding site. The active-site Nucleophile is Ser175. Residue Asn177 coordinates substrate. Positions 217 and 245 each coordinate FMN. 246-247 (NT) contacts substrate. FMN contacts are provided by residues Gly268, Gly297, and 318-319 (YS).

Belongs to the dihydroorotate dehydrogenase family. Type 2 subfamily. Monomer. Requires FMN as cofactor.

It is found in the cell membrane. It carries out the reaction (S)-dihydroorotate + a quinone = orotate + a quinol. Its pathway is pyrimidine metabolism; UMP biosynthesis via de novo pathway; orotate from (S)-dihydroorotate (quinone route): step 1/1. Functionally, catalyzes the conversion of dihydroorotate to orotate with quinone as electron acceptor. This chain is Dihydroorotate dehydrogenase (quinone), found in Shewanella pealeana (strain ATCC 700345 / ANG-SQ1).